The chain runs to 563 residues: Autotransporter BimA (563 aa).

Residues methionine 1 to serine 20 form a disordered region. An N-terminal signal peptide occupies residues methionine 1–alanine 48. Residues alanine 61–tyrosine 472 are surface exposed passenger domain. The WH2 domain occupies alanine 65–valine 82. The tract at residues threonine 96–glutamate 130 is central and acidic domains. The disordered stretch occupies residues arginine 109–threonine 350. Composition is skewed to low complexity over residues alanine 138–arginine 150, proline 162–arginine 197, and serine 211–arginine 227. Composition is skewed to polar residues over residues glycine 228–threonine 238 and serine 269–threonine 281. Positions threonine 473 to arginine 509 are outer membrane translocation of the passenger domain. Beta stranded transmembrane passes span aspartate 510–glycine 519, histidine 525–isoleucine 536, arginine 543–serine 549, and asparagine 553–tryptophan 563. Residues aspartate 510–tryptophan 563 are translocator domain.

This sequence belongs to the autotransporter-2 (AT-2) (TC 1.B.40) family. Homotrimer. Interacts with host G-actin; the interaction is direct. Interacts (via central and acidic domains) with host ACTR2/ARP2 and ACTR3/ARP3.

The protein resides in the cell outer membrane. The protein localises to the cell surface. In terms of biological role, during host cell infection, required for actin-based intracellular motility. Mediates actin tail formation at one pole of the bacteria surface by recruiting host Arp2/3 (ACTR3/ARP3-ACTR2/ARP2) which leads to actin polymerization which provides the propulsive force for intracellular movement and intercellular dissemination of the bacterium. The chain is Autotransporter BimA from Burkholderia thailandensis (strain ATCC 700388 / DSM 13276 / CCUG 48851 / CIP 106301 / E264).